A 317-amino-acid polypeptide reads, in one-letter code: Porphobilinogen deaminase (317 aa).

C245 carries the S-(dipyrrolylmethanemethyl)cysteine modification.

The protein belongs to the HMBS family. As to quaternary structure, monomer. Dipyrromethane serves as cofactor.

The enzyme catalyses 4 porphobilinogen + H2O = hydroxymethylbilane + 4 NH4(+). It functions in the pathway porphyrin-containing compound metabolism; protoporphyrin-IX biosynthesis; coproporphyrinogen-III from 5-aminolevulinate: step 2/4. Its pathway is porphyrin-containing compound metabolism; chlorophyll biosynthesis. Functionally, tetrapolymerization of the monopyrrole PBG into the hydroxymethylbilane pre-uroporphyrinogen in several discrete steps. This Prochlorococcus marinus (strain MIT 9313) protein is Porphobilinogen deaminase.